The chain runs to 152 residues: Transcriptional regulator MraZ (152 aa).

SpoVT-AbrB domains follow at residues 5 to 52 (ASAI…PIHE) and 81 to 124 (AHEV…DEQA).

This sequence belongs to the MraZ family. As to quaternary structure, forms oligomers.

Its subcellular location is the cytoplasm. The protein resides in the nucleoid. The protein is Transcriptional regulator MraZ of Shewanella oneidensis (strain ATCC 700550 / JCM 31522 / CIP 106686 / LMG 19005 / NCIMB 14063 / MR-1).